The chain runs to 693 residues: CREB-regulated transcription coactivator 2 (693 aa).

Residues 1–20 (MATSGANGPGSATASASNPR) are compositionally biased toward polar residues. The tract at residues 1–30 (MATSGANGPGSATASASNPRKFSEKIALQK) is disordered. A2 carries the N-acetylalanine modification. At R51 the chain carries Asymmetric dimethylarginine; by PRMT6. A phosphoserine mark is found at S70, S86, and S90. 3 positions are modified to asymmetric dimethylarginine; by PRMT6: R99, R120, and R123. Residue S136 is modified to Phosphoserine. Residues R161 and R168 each carry the asymmetric dimethylarginine; by PRMT6 modification. T169 carries the phosphothreonine modification. A Phosphoserine; by AMPK, MARK2, SIK1 and SIK2 modification is found at S171. Position 192 is a phosphothreonine (T192). A Glycyl lysine isopeptide (Lys-Gly) (interchain with G-Cter in SUMO2) cross-link involves residue K234. The Nuclear export signal signature appears at 271-287 (TGGSLPDLTNLHFPPPL). S274 is modified (phosphoserine; by MARK2). Disordered regions lie at residues 282-306 (HFPPPLPTPLDPEETAYPSLSGGNS) and 328-554 (GYDA…MSDF). Phosphoserine is present on residues S306, S368, S393, S433, and S456. Low complexity-rich tracts occupy residues 331–378 (APGL…SSLA) and 386–415 (SLGHPSLSAPALSSSSSSSSTSSPVLGAPS). Positions 447 to 468 (SQQQLPKQFSPTMSPTLSSITQ) are enriched in polar residues. The residue at position 488 (Y488) is a Phosphotyrosine. 3 positions are modified to phosphoserine: S489, S490, and S492. Residues 498–507 (QPHTPKSLQQ) show a composition bias toward polar residues. The residue at position 501 (T501) is a Phosphothreonine. Low complexity predominate over residues 509 to 529 (GLPSQSCSVQSSGGQPPGRQS). Phosphoserine is present on residues S613, S623, and S624.

Belongs to the TORC family. As to quaternary structure, binds, as a tetramer, through its N-terminal region, with the bZIP domain of CREB1. 'Arg-314' in the bZIP domain of CREB1 is essential for this interaction. Interaction, via its C-terminal, with TAF4, enhances recruitment of TAF4 to CREB1. Interacts with SIK2. Interacts with 14-3-3 proteins, YWHAB and YWHAG. Interacts (probably when phosphorylated at Ser-171) with YWHAE. Interacts with calmodulin-dependent catalytic subunit PPP3CA/calcineurin A. Interaction with COP1 mediates nuclear export and degradation of CRTC2. In terms of assembly, (Microbial infection) Interaction with the human T-cell leukemia virus type 1 (HTLV-1) Tax protein is essential for optimal transcription activation by Tax. Post-translationally, phosphorylation/dephosphorylation states of Ser-171 are required for regulating transduction of CREB activity. CRTCs/TORCs are inactive when phosphorylated, and active when dephosphorylated at this site. This primary site of phosphorylation, is regulated by cAMP and calcium levels and is dependent on the phosphorylation of SIKs (SIK1 and SIK2) by LKB1. Following adenylyl cyclase activation, dephosphorylated at Ser-171 by PPP3CA/calcineurin A resulting in CRTC2 dissociation from 14-3-3 proteins and PPP3CA. Both insulin and AMPK increase this phosphorylation of CRTC2 while glucagon suppresses it. Phosphorylation at Ser-274 by MARK2 is induced under low glucose conditions and dephosphorylated in response to glucose influx. Phosphorylation at Ser-274 promotes interaction with 14-3-3 proteins and translocation to the cytoplasm. Asymmetric dimethylation of arginine resisues by PRMT6 enhances the association of CRTC2 with CREB on the promoters of gluconeogenic genes. In terms of tissue distribution, most abundantly expressed in the thymus. Present in both B and T-lymphocytes. Highly expressed in HEK293T cells and in insulinomas. High levels also in spleen, ovary, muscle and lung, with highest levels in muscle. Lower levels found in brain, colon, heart, kidney, prostate, small intestine and stomach. Weak expression in liver and pancreas.

Its subcellular location is the cytoplasm. The protein localises to the nucleus. Transcriptional coactivator for CREB1 which activates transcription through both consensus and variant cAMP response element (CRE) sites. Acts as a coactivator, in the SIK/TORC signaling pathway, being active when dephosphorylated and acts independently of CREB1 'Ser-133' phosphorylation. Enhances the interaction of CREB1 with TAF4. Regulates gluconeogenesis as a component of the LKB1/AMPK/TORC2 signaling pathway. Regulates the expression of specific genes such as the steroidogenic gene, StAR. Potent coactivator of PPARGC1A and inducer of mitochondrial biogenesis in muscle cells. Also coactivator for TAX activation of the human T-cell leukemia virus type 1 (HTLV-1) long terminal repeats (LTR). The sequence is that of CREB-regulated transcription coactivator 2 (CRTC2) from Homo sapiens (Human).